The following is a 479-amino-acid chain: RAC-gamma serine/threonine-protein kinase (479 aa).

Serine 2 is modified (N-acetylserine). The region spanning 5 to 107 (TIVKEGWVQK…WTEAIQAVAD (103 aa)) is the PH domain. Cysteines 59 and 76 form a disulfide. A Protein kinase domain is found at 148-405 (FDYLKLLGKG…AKEIMRHSFF (258 aa)). ATP contacts are provided by residues 154–162 (LGKGTFGKV) and lysine 177. The active-site Proton acceptor is aspartate 271. Cysteine 293 and cysteine 307 are joined by a disulfide. O-linked (GlcNAc) threonine glycosylation occurs at threonine 302. Threonine 305 carries the post-translational modification Phosphothreonine; by PDPK1. A glycan (O-linked (GlcNAc) threonine) is linked at threonine 309. In terms of domain architecture, AGC-kinase C-terminal spans 406-479 (SGVNWQDVYD…QFSYSASGRE (74 aa)). A disordered region spans residues 445–479 (TITPPEKYDDDGMDGMDNERRPHFPQFSYSASGRE). Threonine 447 is modified (phosphothreonine). Serine 472 carries the post-translational modification Phosphoserine; by PKC/PRKCZ. O-linked (GlcNAc) serine; alternate glycosylation occurs at serine 472.

The protein belongs to the protein kinase superfamily. AGC Ser/Thr protein kinase family. RAC subfamily. In terms of assembly, interacts (via PH domain) with TCL1A; this enhances AKT3 phosphorylation and activation. Interacts with TRAF6. Interacts with KCTD20. Interacts with BTBD10. In terms of processing, phosphorylation on Thr-305 and Ser-472 is required for full activity. Phosphorylation of the activation loop at Thr-305 by PDPK1/PDK1 is a prerequisite for full activation. Phosphorylation at Ser-472 by mTORC2 in response to growth factors plays a key role in AKT1 activation by facilitating subsequent phosphorylation of the activation loop by PDPK1/PDK1. Ubiquitinated. When fully phosphorylated and translocated into the nucleus, undergoes 'Lys-48'-polyubiquitination catalyzed by TTC3, leading to its degradation by the proteasome. Post-translationally, O-GlcNAcylation at Thr-302 and Thr-309 inhibits activating phosphorylation at Thr-305 via disrupting the interaction between AKT and PDPK1/PDK1. Isoform 1 is expressed in prostate, testis, uterus and mammary gland and isoform 2 is expressed in prostate, testis and mammary gland.

The protein localises to the nucleus. The protein resides in the cytoplasm. Its subcellular location is the membrane. It catalyses the reaction L-seryl-[protein] + ATP = O-phospho-L-seryl-[protein] + ADP + H(+). It carries out the reaction L-threonyl-[protein] + ATP = O-phospho-L-threonyl-[protein] + ADP + H(+). Its activity is regulated as follows. Two specific sites, one in the kinase domain (Thr-305) and the other in the C-terminal regulatory region (Ser-472), need to be phosphorylated for its full activation. IGF-1 leads to the activation of AKT3, which may play a role in regulating cell survival. Its function is as follows. AKT3 is one of 3 closely related serine/threonine-protein kinases (AKT1, AKT2 and AKT3) called the AKT kinase, and which regulate many processes including metabolism, proliferation, cell survival, growth and angiogenesis. This is mediated through serine and/or threonine phosphorylation of a range of downstream substrates. Over 100 substrate candidates have been reported so far, but for most of them, no isoform specificity has been reported. AKT3 is the least studied AKT isoform. It plays an important role in brain development and is crucial for the viability of malignant glioma cells. AKT3 isoform may also be the key molecule in up-regulation and down-regulation of MMP13 via IL13. Required for the coordination of mitochondrial biogenesis with growth factor-induced increases in cellular energy demands. Down-regulation by RNA interference reduces the expression of the phosphorylated form of BAD, resulting in the induction of caspase-dependent apoptosis. The chain is RAC-gamma serine/threonine-protein kinase (Akt3) from Mus musculus (Mouse).